The chain runs to 185 residues: N-alpha-acetyltransferase 30 (185 aa).

Positions 31–179 (IEYIPYQGES…DAVRLLLPLN (149 aa)) constitute an N-acetyltransferase domain.

The protein belongs to the acetyltransferase family. MAK3 subfamily.

Functionally, probable catalytic component of a complex displaying alpha (N-terminal) acetyltransferase activity. The protein is N-alpha-acetyltransferase 30 of Dictyostelium discoideum (Social amoeba).